We begin with the raw amino-acid sequence, 148 residues long: MGRFIFVSFGLLVVFLSLSGSEAGFCCPSHWSSYDRYCYKVFKQEMTWADAEKFCTQQHTGSHLVSFHSTEEVDFVVKMTHQSLKSTFFWIGANNIWNKCNWQWSDGTKPEYKEWHEEFECLISRTFDNQWLSAPCSDTYSFVCKFEA.

The signal sequence occupies residues 1-23; that stretch reads MGRFIFVSFGLLVVFLSLSGSEA. Disulfide bonds link C27/C38, C55/C144, and C121/C136. The region spanning 34 to 148 is the C-type lectin domain; it reads YDRYCYKVFK…TYSFVCKFEA (115 aa).

This sequence belongs to the snaclec family. As to quaternary structure, tetramer of heterodimers of alpha and beta subunits (alphabeta)(4); disulfide-linked. As to expression, expressed by the venom gland.

It is found in the secreted. Functionally, snake venom lectin that activates platelets by binding to the platelet collagen receptor glycoprotein VI (GP6). The indirect activation of integrin alpha-IIb/beta-3 (ITGA2B/ITGB3) also induced by the toxin is upstream the cytoskeletal translocation of GPIb, FcRgamma (FCER1G) and 14-3-3zeta (YWHAZ). The protein is Snaclec convulxin subunit beta of Crotalus durissus terrificus (South American rattlesnake).